A 201-amino-acid polypeptide reads, in one-letter code: Recombination protein RecR (201 aa).

Residues cysteine 57–cysteine 72 form a C4-type zinc finger. The Toprim domain occupies glycine 81 to proline 176.

This sequence belongs to the RecR family.

May play a role in DNA repair. It seems to be involved in an RecBC-independent recombinational process of DNA repair. It may act with RecF and RecO. The polypeptide is Recombination protein RecR (Shigella boydii serotype 18 (strain CDC 3083-94 / BS512)).